We begin with the raw amino-acid sequence, 219 residues long: Large ribosomal subunit protein uL3 (219 aa).

Belongs to the universal ribosomal protein uL3 family. Part of the 50S ribosomal subunit. Forms a cluster with proteins L14 and L19.

Functionally, one of the primary rRNA binding proteins, it binds directly near the 3'-end of the 23S rRNA, where it nucleates assembly of the 50S subunit. The sequence is that of Large ribosomal subunit protein uL3 from Salinispora arenicola (strain CNS-205).